We begin with the raw amino-acid sequence, 317 residues long: Transcriptional regulator LsrR (317 aa).

Residues 33–56 (QSEISDRLGLTRLKVSRLLEKGHQ) constitute a DNA-binding region (H-T-H motif).

This sequence belongs to the SorC transcriptional regulatory family.

It localises to the cytoplasm. With respect to regulation, inactivated by phosphorylated autoinducer-2 (phospho-AI-2). Phospho-AI-2 acts by binding to LsrR, which is then unable to bind to the promoter regions, allowing the transcription of the target genes. Functionally, transcriptional regulator that represses the expression of the lsr operon in the absence of the quorum-sensing signaling molecule autoinducer 2 (AI-2). It also represses the expression of the lsrRK operon. Acts by binding directly to the lsrA and lsrR promoter regions. In the presence of phosphorylated autoinducer-2 (phospho-AI-2), LsrR is inactivated, leading to the transcription of the genes. This Escherichia coli (strain K12 / DH10B) protein is Transcriptional regulator LsrR (lsrR).